Consider the following 335-residue polypeptide: Biotin synthase (335 aa).

In terms of domain architecture, Radical SAM core spans 47–276 (FYGKKVKLNM…SKEIRISGGR (230 aa)). [4Fe-4S] cluster contacts are provided by cysteine 65, cysteine 69, and cysteine 72. The [2Fe-2S] cluster site is built by cysteine 109, cysteine 141, cysteine 201, and arginine 271.

The protein belongs to the radical SAM superfamily. Biotin synthase family. Homodimer. It depends on [4Fe-4S] cluster as a cofactor. Requires [2Fe-2S] cluster as cofactor.

The catalysed reaction is (4R,5S)-dethiobiotin + (sulfur carrier)-SH + 2 reduced [2Fe-2S]-[ferredoxin] + 2 S-adenosyl-L-methionine = (sulfur carrier)-H + biotin + 2 5'-deoxyadenosine + 2 L-methionine + 2 oxidized [2Fe-2S]-[ferredoxin]. The protein operates within cofactor biosynthesis; biotin biosynthesis; biotin from 7,8-diaminononanoate: step 2/2. Its function is as follows. Catalyzes the conversion of dethiobiotin (DTB) to biotin by the insertion of a sulfur atom into dethiobiotin via a radical-based mechanism. This Bacillus subtilis subsp. natto protein is Biotin synthase.